A 111-amino-acid chain; its full sequence is Parvalbumin alpha (111 aa).

T1 carries the post-translational modification N-acetylthreonine; in form C2. EF-hand domains lie at 40–75 (KPDD…FAAG) and 79–111 (LTAN…VKAA). Ca(2+) is bound by residues D53, D55, S57, Y59, E61, E64, D92, D94, D96, K98, and E103.

Belongs to the parvalbumin family. Acetylation of Thr-1 converts C1 to C2.

Its function is as follows. In muscle, parvalbumin is thought to be involved in relaxation after contraction. It binds two calcium ions. In Latimeria chalumnae (Coelacanth), this protein is Parvalbumin alpha.